We begin with the raw amino-acid sequence, 347 residues long: Nicotinate-nucleotide--dimethylbenzimidazole phosphoribosyltransferase (347 aa).

Glutamate 316 (proton acceptor) is an active-site residue.

It belongs to the CobT family.

The enzyme catalyses 5,6-dimethylbenzimidazole + nicotinate beta-D-ribonucleotide = alpha-ribazole 5'-phosphate + nicotinate + H(+). The protein operates within nucleoside biosynthesis; alpha-ribazole biosynthesis; alpha-ribazole from 5,6-dimethylbenzimidazole: step 1/2. Functionally, catalyzes the synthesis of alpha-ribazole-5'-phosphate from nicotinate mononucleotide (NAMN) and 5,6-dimethylbenzimidazole (DMB). This is Nicotinate-nucleotide--dimethylbenzimidazole phosphoribosyltransferase from Vibrio campbellii (strain ATCC BAA-1116).